A 315-amino-acid chain; its full sequence is Ribosomal RNA small subunit methyltransferase H (315 aa).

S-adenosyl-L-methionine is bound by residues G37–H39, D57, F83, D105, and Q112.

The protein belongs to the methyltransferase superfamily. RsmH family.

The protein resides in the cytoplasm. It carries out the reaction cytidine(1402) in 16S rRNA + S-adenosyl-L-methionine = N(4)-methylcytidine(1402) in 16S rRNA + S-adenosyl-L-homocysteine + H(+). Functionally, specifically methylates the N4 position of cytidine in position 1402 (C1402) of 16S rRNA. The chain is Ribosomal RNA small subunit methyltransferase H from Pseudomonas putida (strain ATCC 700007 / DSM 6899 / JCM 31910 / BCRC 17059 / LMG 24140 / F1).